The primary structure comprises 328 residues: Cytochrome c biogenesis protein CcsA (328 aa).

Transmembrane regions (helical) follow at residues 13–33 (ISFS…LVNL), 46–66 (GIII…IYSG), 73–93 (LYES…VSYF), 101–121 (LNAI…SGLL), 146–166 (MILG…LLVI), 234–254 (IISL…VWAN), 263–283 (WDPK…YLHI), and 295–315 (AIVA…VNLL).

The protein belongs to the CcmF/CycK/Ccl1/NrfE/CcsA family. As to quaternary structure, may interact with Ccs1.

The protein localises to the plastid. It localises to the chloroplast thylakoid membrane. Its function is as follows. Required during biogenesis of c-type cytochromes (cytochrome c6 and cytochrome f) at the step of heme attachment. In Capsella bursa-pastoris (Shepherd's purse), this protein is Cytochrome c biogenesis protein CcsA.